Reading from the N-terminus, the 360-residue chain is Hyaluronan and proteoglycan link protein 3 (360 aa).

A signal peptide spans 1–17 (MGLLLLVPLLLLPGSYG). The region spanning 48-164 (KLVVETPEET…ESGLVELELR (117 aa)) is the Ig-like V-type domain. 5 cysteine pairs are disulfide-bonded: Cys-70–Cys-146, Cys-188–Cys-259, Cys-212–Cys-233, Cys-286–Cys-356, and Cys-311–Cys-332. 2 Link domains span residues 166 to 261 (VVFP…FCFA) and 266 to 358 (GRVY…YCYR).

This sequence belongs to the HAPLN family. In terms of tissue distribution, widely expressed with highest levels in spleen and placenta.

The protein resides in the secreted. It is found in the extracellular space. It localises to the extracellular matrix. May function in hyaluronic acid binding. This Homo sapiens (Human) protein is Hyaluronan and proteoglycan link protein 3 (HAPLN3).